Consider the following 534-residue polypeptide: uncharacterized protein (534 aa).

This is an uncharacterized protein from Escherichia coli (strain K12).